The sequence spans 543 residues: Periplasmic oligopeptide-binding protein OppA (543 aa).

The signal sequence occupies residues 1-26 (MSNITKKSLIAAGILTALIAASAATA). Residues Cys297 and Cys443 are joined by a disulfide bond.

It belongs to the bacterial solute-binding protein 5 family. The complex is composed of two ATP-binding proteins (OppD and OppF), two transmembrane proteins (OppB and OppC) and a solute-binding protein (OppA).

Its subcellular location is the periplasm. Its function is as follows. Part of the ABC transporter complex OppABCDF involved in the uptake of oligopeptides, including the cell wall murein tripeptide L-alanyl-gamma-D-glutamyl-meso-diaminopimelate. Plays an important nutritional role and is involved in the recycling of cell wall peptides. Binds peptides containing from two to five amino acid residues regardless of their sequence. Also binds cell wall peptides, such as L-alanyl-gamma-D-glutamyl-meso-diaminopimelate. This Salmonella typhimurium (strain LT2 / SGSC1412 / ATCC 700720) protein is Periplasmic oligopeptide-binding protein OppA.